Consider the following 338-residue polypeptide: Protein FosB (338 aa).

Disordered regions lie at residues 1-54 and 80-179; these read MFQA…PGSF and AQSQ…RREL. Composition is skewed to polar residues over residues 13–31 and 102–112; these read SRCS…SVDS and TSYSTPGLSAY. Serine 27 is subject to Phosphoserine. Positions 123–137 are enriched in low complexity; the sequence is PSTSTTTSGPVSARP. The bZIP domain occupies 155–218; it reads EEKRRVRRER…ERLEFVLVAH (64 aa). The interval 157–182 is basic motif; sequence KRRVRRERNKLAAAKCRNRRRELTDR. Residues 183-211 are leucine-zipper; sequence LQAETDQLEEEKAELESEIAELQKEKERL. 2 disordered regions span residues 222 to 276 and 316 to 338; these read CKIP…PPNL and GAQR…LLAL. The span at 256–265 shows a compositional bias: pro residues; that stretch reads LPPPPPPPLP. 2 stretches are compositionally biased toward polar residues: residues 266 to 276 and 318 to 338; these read FQSSRDAPPNL and QRTS…LLAL.

This sequence belongs to the bZIP family. Fos subfamily. Heterodimer; binds to DNA as heterodimer. Component of an AP-1 transcription factor complex; composed of FOS-JUN heterodimers. As part of the AP-1 transcription factor complex, forms heterodimers with JUN, JUNB or JUND, thereby binding to the AP-1 consensus sequence and stimulating transcription. Interacts with the BAF multiprotein chromatin-remodeling complex subunits SMARCB1 and SMARCD1. Interacts with ARID1A and JUN. In terms of assembly, homodimer under oxidizing conditions and monomer under reducing conditions (in vitro). Heterodimer; binds to DNA as heterodimer. Forms heterodimers with JUNB, JUN or JUND; thereby binding to the AP-1 consensus sequence but does not stimulate transcription. Forms heterodimers with JUND under oxidizing conditions. Post-translationally, phosphorylated. In terms of processing, phosphorylated at Ser-27 by CSNK2A1; phosphorylation increases protein stability and transactivation potential. Expressed in brain, including the preoptic area of the hypothalamus, the main and accessory olfactory bulbs, the pyriform cortex and the hippocampus (at protein level). Expressed in the neurons of the subgranular zone of the dentate gyrus in the hippocampus (at protein level). Expressed in pyramidal cells in CA1 and CA3, in the dentate gyrus and the nucleus accumbens of the striatum (at protein level). In terms of tissue distribution, expressed in the core and shell of the nucleus accumbens of the striatum (at protein level). Expressed in the neurons of the subgranular zone of the dentate gyrus in the hippocampus (at protein level).

It is found in the nucleus. In terms of biological role, heterodimerizes with proteins of the JUN family to form an AP-1 transcription factor complex, thereby enhancing their DNA binding activity to gene promoters containing an AP-1 consensus sequence 5'-TGA[GC]TCA-3' and enhancing their transcriptional activity. As part of the AP-1 complex, facilitates enhancer selection together with cell-type-specific transcription factors by collaboratively binding to nucleosomal enhancers and recruiting the SWI/SNF (BAF) chromatin remodeling complex to establish accessible chromatin. Together with JUN, plays a role in activation-induced cell death of T cells by binding to the AP-1 promoter site of FASLG/CD95L, and inducing its transcription in response to activation of the TCR/CD3 signaling pathway. Exhibits transactivation activity in vitro. Involved in the display of nurturing behavior towards newborns. May play a role in neurogenesis in the hippocampus and in learning and memory-related tasks by regulating the expression of various genes involved in neurogenesis, depression and epilepsy. Implicated in behavioral responses related to morphine reward and spatial memory. Functionally, exhibits lower transactivation activity than isoform 1 in vitro. The heterodimer with JUN does not display any transcriptional activity, and may thereby act as an transcriptional inhibitor. May be involved in the regulation of neurogenesis in the hippocampus. May play a role in synaptic modifications in nucleus accumbens medium spiny neurons and thereby play a role in adaptive and pathological reward-dependent learning, including maladaptive responses involved in drug addiction. Seems to be more stably expressed with a half-life of ~9.5 hours in cell culture as compared to 1.5 hours half-life of isoform 1. The polypeptide is Protein FosB (Mus musculus (Mouse)).